The sequence spans 618 residues: Chaperone protein HtpG (618 aa).

The a; substrate-binding stretch occupies residues 1–331 (MAKHTFQTEV…SEDLPLNVSR (331 aa)). Residues 332 to 541 (EILQQNRILA…EDDPNFAMIK (210 aa)) are b. The c stretch occupies residues 542-618 (MMRQMGNALG…RLNAMLERAI (77 aa)).

This sequence belongs to the heat shock protein 90 family. Homodimer.

It is found in the cytoplasm. Molecular chaperone. Has ATPase activity. The protein is Chaperone protein HtpG of Wolinella succinogenes (strain ATCC 29543 / DSM 1740 / CCUG 13145 / JCM 31913 / LMG 7466 / NCTC 11488 / FDC 602W) (Vibrio succinogenes).